Reading from the N-terminus, the 199-residue chain is MFIVLEGIDGSGKSTQVKLLSKFLAKDGYPCVLTREPGGTSFAESLRSMILHDPIDPMARLLLIVSARVDHYNKVILPALKEGKVVVCDRFIYSTLAYQGYGDKIDLQTILDLHRLSGCLVEPDLTLLLLGSGHKKLGRDNFERMPREYLSNVCMGYEKIARMYPNIHVIKCMGVGRTSEEIVKIVQGKISEKQTSSCR.

7 to 14 (GIDGSGKS) provides a ligand contact to ATP.

Belongs to the thymidylate kinase family.

The enzyme catalyses dTMP + ATP = dTDP + ADP. Phosphorylation of dTMP to form dTDP in both de novo and salvage pathways of dTTP synthesis. The sequence is that of Thymidylate kinase from Neorickettsia sennetsu (strain ATCC VR-367 / Miyayama) (Ehrlichia sennetsu).